The chain runs to 326 residues: Aquaporin-3 (326 aa).

2 helical membrane passes run L24 to A44 and L64 to G84. Positions N88–A90 match the NPA 1 motif. A helical transmembrane segment spans residues L107 to V127. N-linked (GlcNAc...) asparagine glycosylation occurs at N146. A run of 2 helical transmembrane segments spans residues I166–P186 and I196–G216. An NPA 2 motif is present at residues N220–A222. The chain crosses the membrane as a helical span at residues L247–Y267. The N-linked (GlcNAc...) asparagine glycan is linked to N294.

The protein belongs to the MIP/aquaporin (TC 1.A.8) family.

Its subcellular location is the cell membrane. Functionally, aquaglyceroporin that may modulate the water content and osmolytes during anhydrobiosis. This chain is Aquaporin-3, found in Milnesium tardigradum (Water bear).